The chain runs to 211 residues: MASGLKLPRLYAIVDADCFGPEPSLATLTHFAKELVAGGVTLLQYRNKQGSAREILSHARELKRALPPEVTLLLNDRADLAIAAGFHGVHVGQDDLSPEGARLVVGPEMFVGTSTHNPEQLQIADKATVDYLAIGPIFATKSKINPDPVVGLDRLRAVRKLTSKPLVAIGGITRENCRSVIDAGADSVAVIADLLVDPRQRASEFLQILHS.

4-amino-2-methyl-5-(diphosphooxymethyl)pyrimidine is bound by residues 44 to 48 (QYRNK) and N75. Residues D76 and D95 each coordinate Mg(2+). S114 is a binding site for 4-amino-2-methyl-5-(diphosphooxymethyl)pyrimidine. 140-142 (TKS) lines the 2-[(2R,5Z)-2-carboxy-4-methylthiazol-5(2H)-ylidene]ethyl phosphate pocket. K143 contributes to the 4-amino-2-methyl-5-(diphosphooxymethyl)pyrimidine binding site. Position 171 (G171) interacts with 2-[(2R,5Z)-2-carboxy-4-methylthiazol-5(2H)-ylidene]ethyl phosphate.

This sequence belongs to the thiamine-phosphate synthase family. Mg(2+) serves as cofactor.

The catalysed reaction is 2-[(2R,5Z)-2-carboxy-4-methylthiazol-5(2H)-ylidene]ethyl phosphate + 4-amino-2-methyl-5-(diphosphooxymethyl)pyrimidine + 2 H(+) = thiamine phosphate + CO2 + diphosphate. It catalyses the reaction 2-(2-carboxy-4-methylthiazol-5-yl)ethyl phosphate + 4-amino-2-methyl-5-(diphosphooxymethyl)pyrimidine + 2 H(+) = thiamine phosphate + CO2 + diphosphate. It carries out the reaction 4-methyl-5-(2-phosphooxyethyl)-thiazole + 4-amino-2-methyl-5-(diphosphooxymethyl)pyrimidine + H(+) = thiamine phosphate + diphosphate. It functions in the pathway cofactor biosynthesis; thiamine diphosphate biosynthesis; thiamine phosphate from 4-amino-2-methyl-5-diphosphomethylpyrimidine and 4-methyl-5-(2-phosphoethyl)-thiazole: step 1/1. In terms of biological role, condenses 4-methyl-5-(beta-hydroxyethyl)thiazole monophosphate (THZ-P) and 2-methyl-4-amino-5-hydroxymethyl pyrimidine pyrophosphate (HMP-PP) to form thiamine monophosphate (TMP). This chain is Thiamine-phosphate synthase, found in Koribacter versatilis (strain Ellin345).